The chain runs to 1975 residues: Cadherin-87A (1975 aa).

The N-terminal stretch at 1-17 is a signal peptide; the sequence is MKLPLGLLMICLGLTLA. Over 18–1775 the chain is Extracellular; that stretch reads KGETNLPPVF…AIVQDEFDLA (1758 aa). Cadherin domains follow at residues 28–132, 133–245, 246–358, 359–472, 473–669, 670–774, 775–878, 879–998, 999–1103, 1104–1211, 1212–1318, 1319–1431, 1432–1553, and 1554–1677; these read TQTL…PPEF, QNTP…PPVF, QGSL…PPVF, NHKE…KPVF, EQES…PPVC, ESPL…VPNF, EQQS…DPYF, VPAT…PPRF, NAPW…DPKF, SQSD…APVF, TRDV…KPEF, VIPA…RPEF, PDAS…PPVF, and EKPI…PPEE. Asn-39, Asn-77, and Asn-203 each carry an N-linked (GlcNAc...) asparagine glycan. Residue Asn-424 is glycosylated (N-linked (GlcNAc...) asparagine). Positions 535–560 are disordered; that stretch reads CHDNGESNRRERRDLNEDEHVEEDDG. Residues 537–549 show a composition bias toward basic and acidic residues; sequence DNGESNRRERRDL. Positions 550–560 are enriched in acidic residues; that stretch reads NEDEHVEEDDG. N-linked (GlcNAc...) asparagine glycans are attached at residues Asn-730 and Asn-761. 10 N-linked (GlcNAc...) asparagine glycosylation sites follow: Asn-1039, Asn-1049, Asn-1111, Asn-1163, Asn-1217, Asn-1325, Asn-1349, Asn-1492, Asn-1576, and Asn-1691. The helical transmembrane segment at 1776 to 1796 threads the bilayer; sequence VAGLVALVIVLFVGVISFIVL. At 1797–1975 the chain is on the cytoplasmic side; it reads CCCLKHWNLS…DGDDAVAELI (179 aa). A compositionally biased stretch (polar residues) spans 1887-1899; the sequence is YATIQPRNNQNRL. A disordered region spans residues 1887–1916; it reads YATIQPRNNQNRLTGGGGAGGGSMRSGGGA. Gly residues predominate over residues 1900-1916; sequence TGGGGAGGGSMRSGGGA.

The protein resides in the cell membrane. Cadherins are calcium-dependent cell adhesion proteins. They preferentially interact with themselves in a homophilic manner in connecting cells. This chain is Cadherin-87A (Cad87A), found in Drosophila melanogaster (Fruit fly).